The sequence spans 184 residues: UPF0398 protein OB1025 (184 aa).

The protein belongs to the UPF0398 family.

This chain is UPF0398 protein OB1025, found in Oceanobacillus iheyensis (strain DSM 14371 / CIP 107618 / JCM 11309 / KCTC 3954 / HTE831).